Consider the following 243-residue polypeptide: MESSGLRAPCSLLVLLSALVLPPTLAIEVYTDREVYGTVGSRVTLSCSFWSSEWISDDVSVTWHYQPDHSREMYSIFHYAKGQPSIDAGVFKDRIEWVGSPKWKDASIVLHNLELIDNGTFTCDVKNPPDVVGKSSYVHLQVQEKGAARAGLVLGIIIAVALALVIVVTILILLIRYCWLRRQVRVQRELSALERGKLHKAKDSSKRSSRQTPILYAMLDQTRGKASEKKGKGGIGDSRKDRK.

An N-terminal signal peptide occupies residues 1–26 (MESSGLRAPCSLLVLLSALVLPPTLA). The 115-residue stretch at 27 to 141 (IEVYTDREVY…VGKSSYVHLQ (115 aa)) folds into the Ig-like V-type domain. At 27 to 154 (IEVYTDREVY…KGAARAGLVL (128 aa)) the chain is on the extracellular side. Cysteines 47 and 123 form a disulfide. A glycan (N-linked (GlcNAc...) asparagine) is linked at Asn-118. A helical transmembrane segment spans residues 155–175 (GIIIAVALALVIVVTILILLI). The Cytoplasmic segment spans residues 176–243 (RYCWLRRQVR…GIGDSRKDRK (68 aa)). The disordered stretch occupies residues 201–243 (AKDSSKRSSRQTPILYAMLDQTRGKASEKKGKGGIGDSRKDRK). Residues 222-243 (TRGKASEKKGKGGIGDSRKDRK) show a composition bias toward basic and acidic residues.

Belongs to the myelin P0 protein family.

The protein resides in the cell membrane. Functionally, creation of an extracellular membrane face which guides the wrapping process and ultimately compacts adjacent lamellae. The chain is Myelin protein P0 (mpz) from Xenopus tropicalis (Western clawed frog).